The primary structure comprises 503 residues: Long-chain-aldehyde dehydrogenase (503 aa).

Residue 218-224 (GYGAEVG) participates in NAD(+) binding. Active-site residues include E262 and C301.

It belongs to the aldehyde dehydrogenase family. Homotetramer.

It catalyses the reaction a long-chain fatty aldehyde + NAD(+) + H2O = a long-chain fatty acid + NADH + 2 H(+). Its activity is regulated as follows. Completely inhibited by p-chloromercuribenzoate and N-ethylmaleimide. Strongly inhibited by iodoacetate. Inhibited by Pb(2+), Fe(3+), Ag(+) and Hg(2+) and partially inhibited by several other metal ions Mn(2+), Zn(2+) and Cu(2+). Its function is as follows. Aldehyde dehydrogenase that shows activity toward n-alkanals (C(4) to C(14)), with a preference for longer carbon chains. The best substrate is tetradecanal. In Acinetobacter sp, this protein is Long-chain-aldehyde dehydrogenase (ald1).